Consider the following 585-residue polypeptide: Cysteine/serine-rich nuclear protein 3 (585 aa).

Disordered regions lie at residues 1-52 and 335-395; these read MSGI…TPSS and ELDC…GFVE. Residues 30–40 are compositionally biased toward low complexity; it reads SSESADSGDSV. A compositionally biased stretch (polar residues) spans 41–52; sequence NPSTSSHFTPSS. Over residues 335 to 349 the composition is skewed to acidic residues; that stretch reads ELDCQGEEEEEEEDG. Residues 351 to 366 show a composition bias toward polar residues; the sequence is SFCSGVTDSSTQSLAP. Over residues 368 to 389 the composition is skewed to acidic residues; it reads ESDEEEEEEEEEEEEEDDDDDK.

It belongs to the AXUD1 family.

The protein resides in the nucleus. Its function is as follows. Binds to the consensus sequence 5'-AGAGTG-3' and has transcriptional activator activity. Plays a role in apoptosis. The polypeptide is Cysteine/serine-rich nuclear protein 3 (CSRNP3) (Homo sapiens (Human)).